Here is a 350-residue protein sequence, read N- to C-terminus: Inner membrane protein YhiM (350 aa).

Topologically, residues 1-2 (MN) are cytoplasmic. The chain crosses the membrane as a helical span at residues 3–23 (IYIGWLFKLIPLIMGLICIAL). Topologically, residues 24-41 (GGFVLESSGQSEYFVAGH) are periplasmic. A helical transmembrane segment spans residues 42 to 62 (VLISLAAICLALFTTAFIIIS). The Cytoplasmic portion of the chain corresponds to 63–74 (QLTRGVNTFYNT). The helical transmembrane segment at 75-95 (LFPIIGYAGSIITMIWGWALL) threads the bilayer. The Periplasmic portion of the chain corresponds to 96 to 104 (AGNDVMADE). Residues 105–125 (FVAGHVIFGVGMIAACVSTVA) form a helical membrane-spanning segment. At 126–157 (ASSGHFLLIPKNAAGSKSDGTPVQAYSSLIGN) the chain is on the cytoplasmic side. The chain crosses the membrane as a helical span at residues 158-178 (CLIAVPVLLTLLGFIWSITLL). Residues 179–190 (RSADITPHYVAG) lie on the Periplasmic side of the membrane. A helical transmembrane segment spans residues 191–211 (HVLLGLTAICACLIGLVATIV). Residues 212–225 (HQTRNTFSTKEHWL) lie on the Cytoplasmic side of the membrane. The chain crosses the membrane as a helical span at residues 226–246 (WCYWVIFLGSITVLQGIYVLV). At 247-257 (SSDASARLAPG) the chain is on the periplasmic side. The helical transmembrane segment at 258 to 278 (IILICLGMICYSIFSKVWLLA) threads the bilayer. The Cytoplasmic segment spans residues 279–290 (LVWRRTCSLANR). The helical transmembrane segment at 291-311 (IPMIPVFTCLFCLFLASFLAE) threads the bilayer. The Periplasmic portion of the chain corresponds to 312–324 (MAQTDMGYFIPSR). The chain crosses the membrane as a helical span at residues 325–345 (VLVGLGAVCFTLFSIVSILEA). Topologically, residues 346–350 (GSAKK) are cytoplasmic.

The protein resides in the cell inner membrane. This is Inner membrane protein YhiM (yhiM) from Escherichia coli (strain K12).